Reading from the N-terminus, the 936-residue chain is Protocadherin gamma-A10 (936 aa).

An N-terminal signal peptide occupies residues 1–32 (MAAQRNRSKESKDCSGLVLLCLFFGIPWEAGA). Cadherin domains are found at residues 33 to 137 (RQIS…APTF), 138 to 246 (QAEN…APVF), 247 to 351 (TLPE…SPEL), 352 to 456 (TITS…PPTF), 457 to 566 (SQVS…APEI), and 574 to 687 (DGST…SPAN). Residues 33–696 (RQISYSIPEE…NSETSDLTLY (664 aa)) are Extracellular-facing. Residue N51 is glycosylated (N-linked (GlcNAc...) asparagine). N423 and N549 each carry an N-linked (GlcNAc...) asparagine glycan. Residues 697–717 (LVVAVAAVSCVFLAFVIVLLA) traverse the membrane as a helical segment. Topologically, residues 718–936 (LRLRRWHKSR…KKKSGKKEKK (219 aa)) are cytoplasmic. Disordered stretches follow at residues 801-845 (SKFP…WPNN) and 906-936 (ATLT…KEKK). Over residues 820 to 845 (WRFSQAQRPGTSGSQNGDDTGTWPNN) the composition is skewed to polar residues. Basic residues predominate over residues 926 to 936 (NKKKSGKKEKK).

The protein resides in the cell membrane. Its function is as follows. Potential calcium-dependent cell-adhesion protein. May be involved in the establishment and maintenance of specific neuronal connections in the brain. This is Protocadherin gamma-A10 (PCDHGA10) from Pan troglodytes (Chimpanzee).